We begin with the raw amino-acid sequence, 578 residues long: Protein O-linked-mannose beta-1,4-N-acetylglucosaminyltransferase 2 (578 aa).

Over 1–4 (MNLP) the chain is Cytoplasmic. A helical; Signal-anchor for type II membrane protein membrane pass occupies residues 5–25 (AVLNGLLVSVVAALLWKYVRL). Over 26-578 (VEHTSQLEEE…PFADVLICKT (553 aa)) the chain is Lumenal. Asn98, Asn275, and Asn541 each carry an N-linked (GlcNAc...) asparagine glycan. Residues 482–578 (RVREPKCQTS…PFADVLICKT (97 aa)) enclose the Fibronectin type-III domain.

It belongs to the glycosyltransferase 61 family.

The protein localises to the endoplasmic reticulum membrane. It catalyses the reaction 3-O-(alpha-D-mannosyl)-L-threonyl-[protein] + UDP-N-acetyl-alpha-D-glucosamine = 3-O-(N-acetyl-beta-D-glucosaminyl-(1-&gt;4)-alpha-D-mannosyl)-L-threonyl-[protein] + UDP + H(+). It functions in the pathway protein modification; protein glycosylation. Functionally, O-linked mannose beta-1,4-N-acetylglucosaminyltransferase that transfers UDP-N-acetyl-D-glucosamine to the 4-position of the mannose to generate N-acetyl-D-glucosamine-beta-1,4-O-D-mannosylprotein. Involved in the biosynthesis of the phosphorylated O-mannosyl trisaccharide (N-acetylgalactosamine-beta-3-N-acetylglucosamine-beta-4-(phosphate-6-)mannose), a carbohydrate structure present in alpha-dystroglycan (DAG1), which is required for binding laminin G-like domain-containing extracellular proteins with high affinity. The sequence is that of Protein O-linked-mannose beta-1,4-N-acetylglucosaminyltransferase 2 (pomgnt2) from Danio rerio (Zebrafish).